Here is a 233-residue protein sequence, read N- to C-terminus: MSSDIQQIRIGLTNNHPCSYLADRMERVAVAIDPQMQTPETYEVLMANGFRRSGDTIYKPHCDHCQSCQALRIPAPDFVPSKSQKRLLKLLSQEFHWQLKPELDEDWYTLYARYIFARHRHGSMYPPNKMEFAKFARAKWLNTQYLHLYQGEKLVAIAVTDLLPNSASAFYTFYDPDISISLGTLAVLCQLNYCQQTKKQWLYLGYQIDECPAMNYKVRFNPHQRLVNQRWRG.

This sequence belongs to the R-transferase family. Bpt subfamily.

The protein resides in the cytoplasm. The enzyme catalyses N-terminal L-glutamyl-[protein] + L-leucyl-tRNA(Leu) = N-terminal L-leucyl-L-glutamyl-[protein] + tRNA(Leu) + H(+). It carries out the reaction N-terminal L-aspartyl-[protein] + L-leucyl-tRNA(Leu) = N-terminal L-leucyl-L-aspartyl-[protein] + tRNA(Leu) + H(+). Functions in the N-end rule pathway of protein degradation where it conjugates Leu from its aminoacyl-tRNA to the N-termini of proteins containing an N-terminal aspartate or glutamate. The protein is Aspartate/glutamate leucyltransferase of Vibrio cholerae serotype O1 (strain ATCC 39315 / El Tor Inaba N16961).